Consider the following 153-residue polypeptide: 4'-phosphopantetheinyl transferase B, mitochondrial (153 aa).

Belongs to the P-Pant transferase superfamily.

The protein localises to the mitochondrion. It catalyses the reaction apo-[ACP] + CoA = holo-[ACP] + adenosine 3',5'-bisphosphate + H(+). In terms of biological role, acyl-carrier-protein synthase transfers the 4'-phosphopantetheine moiety from coenzyme A to a Ser of an acyl-carrier-protein. The 4'-phosphopantetheine (4'-PPT) portion of CoA provides the essential prosthetic group for a number of carrier proteins and multi-domain enzymes, priming them for the acceptance of acyl building blocks in fatty acid synthesis and many aspects of secondary metabolism mediated by polyketide synthases (PKSs) and non-ribosomal peptide synthetases (NRPSs). PptB is specific for the mitochondrial acyl carrier protein acpA. The sequence is that of 4'-phosphopantetheinyl transferase B, mitochondrial from Aspergillus fumigatus (strain ATCC MYA-4609 / CBS 101355 / FGSC A1100 / Af293) (Neosartorya fumigata).